A 600-amino-acid polypeptide reads, in one-letter code: Repressor of filamentous growth 1 (600 aa).

Residues 1 to 14 (MSTAIYYSTHNNMH) are compositionally biased toward polar residues. 6 disordered regions span residues 1–59 (MSTA…NSAN), 112–160 (NGGY…TDIS), 180–200 (GIDG…NNNN), 266–337 (AEEE…SRDN), 427–549 (STTS…GYDN), and 564–600 (QQGL…QPPQ). 2 stretches are compositionally biased toward low complexity: residues 20–39 (TNGS…SNPN) and 47–59 (INNN…NSAN). The segment covering 131–160 (FDTSYSNQTTPTSAYTNFNNDSTHSPTDIS) has biased composition (polar residues). A compositionally biased stretch (low complexity) spans 188 to 200 (NNNNNNNNNNNNN). The HMG box DNA-binding region spans 212–281 (IPRPRNAFIL…NHAKKYPGYR (70 aa)). Positions 272–289 (NHAKKYPGYRYTPRRNGR) are enriched in basic residues. Over residues 297 to 312 (KNKPLPNNKSNSISGM) the composition is skewed to low complexity. Residues 313 to 322 (SGSGGGGGSI) are compositionally biased toward gly residues. Residues 427 to 470 (STTSTTAPTTTTTTTTNASSIGLSVPPTATTTSTSSQPTSANSQ) are compositionally biased toward low complexity. Positions 481–496 (PVSSTHHQSSISEIAA) are enriched in polar residues. Over residues 497-506 (QQQQQQQQQQ) the composition is skewed to low complexity. The span at 507-547 (FMYNTNYSTIPPNNTTTMQQHSAGTGNDYSLNGNNSGNTGY) shows a compositional bias: polar residues. 2 stretches are compositionally biased toward low complexity: residues 564–574 (QQGLQVQQQGQ) and 581–600 (HAAQ…QPPQ).

It is found in the nucleus. Its function is as follows. Transcription regulator that functions in both the positive and negative regulation of filamentous growth, depending upon the environmental conditions. Recruits the TUP1/SSN6 general repression complex to achieve repression. Regulates genes encoding cell wall components that are specifically expressed in the filamentous forms such as HWP1, RBT1, HYR1, ECE1, ALS1, RBT4 and RBT5. This chain is Repressor of filamentous growth 1 (RFG1), found in Candida albicans (strain SC5314 / ATCC MYA-2876) (Yeast).